The following is a 99-amino-acid chain: Large ribosomal subunit protein bL27 (99 aa).

Residues 1–10 (MKLIFDIQLF) constitute a propeptide that is removed on maturation.

The protein belongs to the bacterial ribosomal protein bL27 family. The N-terminus is cleaved by ribosomal processing cysteine protease Prp.

This is Large ribosomal subunit protein bL27 from Caldicellulosiruptor saccharolyticus (strain ATCC 43494 / DSM 8903 / Tp8T 6331).